Here is a 239-residue protein sequence, read N- to C-terminus: uncharacterized protein (239 aa).

Positions Met1–Ala23 are cleaved as a signal peptide. The segment covering Ala220–Arg230 has biased composition (basic and acidic residues). The disordered stretch occupies residues Ala220–Lys239.

This is an uncharacterized protein from Sinorhizobium fredii (strain NBRC 101917 / NGR234).